Consider the following 722-residue polypeptide: Polyribonucleotide nucleotidyltransferase (722 aa).

Positions 487 and 493 each coordinate Mg(2+). The region spanning 554–613 is the KH domain; it reads PRIETFKIPTDKIREVIGTGGKVIREIVEKTGAKVNIEDDGTVKVASSDGESIKAAIKWI. The S1 motif domain occupies 623–691; that stretch reads GEIYEGTVVK…DRGKTRLSMK (69 aa). Residues 697 to 722 form a disordered region; the sequence is TGEDLEAKQKAEAKAEGEAPAQAAGE. The span at 701 to 713 shows a compositional bias: basic and acidic residues; that stretch reads LEAKQKAEAKAEG.

Belongs to the polyribonucleotide nucleotidyltransferase family. Requires Mg(2+) as cofactor.

Its subcellular location is the cytoplasm. It carries out the reaction RNA(n+1) + phosphate = RNA(n) + a ribonucleoside 5'-diphosphate. Involved in mRNA degradation. Catalyzes the phosphorolysis of single-stranded polyribonucleotides processively in the 3'- to 5'-direction. The sequence is that of Polyribonucleotide nucleotidyltransferase from Rhodopseudomonas palustris (strain TIE-1).